We begin with the raw amino-acid sequence, 326 residues long: GTP 3',8-cyclase (326 aa).

The Radical SAM core domain occupies 7-240; that stretch reads AFARKFYYLR…AQVFHHSDYQ (234 aa). Arg-16 lines the GTP pocket. Residues Cys-23 and Cys-27 each contribute to the [4Fe-4S] cluster site. Tyr-29 contacts S-adenosyl-L-methionine. Cys-30 is a [4Fe-4S] cluster binding site. Position 65 (Arg-65) interacts with GTP. S-adenosyl-L-methionine is bound at residue Gly-69. Position 96 (Thr-96) interacts with GTP. An S-adenosyl-L-methionine-binding site is contributed by Ser-120. Lys-157 lines the GTP pocket. Met-191 lines the S-adenosyl-L-methionine pocket. [4Fe-4S] cluster is bound by residues Cys-254 and Cys-257. 259–261 contacts GTP; the sequence is RLR. Cys-271 is a binding site for [4Fe-4S] cluster.

It belongs to the radical SAM superfamily. MoaA family. In terms of assembly, monomer and homodimer. The cofactor is [4Fe-4S] cluster.

The catalysed reaction is GTP + AH2 + S-adenosyl-L-methionine = (8S)-3',8-cyclo-7,8-dihydroguanosine 5'-triphosphate + 5'-deoxyadenosine + L-methionine + A + H(+). Its pathway is cofactor biosynthesis; molybdopterin biosynthesis. Catalyzes the cyclization of GTP to (8S)-3',8-cyclo-7,8-dihydroguanosine 5'-triphosphate. This Yersinia pestis protein is GTP 3',8-cyclase.